We begin with the raw amino-acid sequence, 585 residues long: Pyruvate kinase (585 aa).

Substrate is bound at residue Arg32. Positions 34, 36, 66, and 67 each coordinate K(+). An ATP-binding site is contributed by Asn34 to His37. ATP is bound by residues Arg73 and Lys156. Glu221 contributes to the Mg(2+) binding site. Substrate contacts are provided by Gly244, Asp245, and Thr277. A Mg(2+)-binding site is contributed by Asp245.

This sequence belongs to the pyruvate kinase family. It in the C-terminal section; belongs to the PEP-utilizing enzyme family. Mg(2+) is required as a cofactor. The cofactor is K(+).

It carries out the reaction pyruvate + ATP = phosphoenolpyruvate + ADP + H(+). It participates in carbohydrate degradation; glycolysis; pyruvate from D-glyceraldehyde 3-phosphate: step 5/5. This chain is Pyruvate kinase (pyk), found in Staphylococcus epidermidis (strain ATCC 35984 / DSM 28319 / BCRC 17069 / CCUG 31568 / BM 3577 / RP62A).